A 489-amino-acid polypeptide reads, in one-letter code: Rhamnulokinase (489 aa).

13–17 (ASSGR) is an ATP binding site. A disulfide bridge links Cys-68 with Cys-222. Residues Gly-83 and 236–238 (HDT) contribute to the substrate site. Residue Asp-237 is the Proton acceptor of the active site. ATP is bound at residue Thr-259. Residue Asn-296 coordinates substrate. Gln-304 is an ATP binding site. A disulfide bond links Cys-353 and Cys-370. Gly-402 lines the ATP pocket. Cys-413 and Cys-417 are oxidised to a cystine.

This sequence belongs to the rhamnulokinase family. Monomer. Mg(2+) serves as cofactor.

The enzyme catalyses L-rhamnulose + ATP = L-rhamnulose 1-phosphate + ADP + H(+). It functions in the pathway carbohydrate degradation; L-rhamnose degradation; glycerone phosphate from L-rhamnose: step 2/3. Functionally, involved in the catabolism of L-rhamnose (6-deoxy-L-mannose). Catalyzes the transfer of the gamma-phosphate group from ATP to the 1-hydroxyl group of L-rhamnulose to yield L-rhamnulose 1-phosphate. The chain is Rhamnulokinase from Escherichia coli (strain SE11).